Reading from the N-terminus, the 451-residue chain is tRNA-2-methylthio-N(6)-dimethylallyladenosine synthase (451 aa).

The region spanning 11-127 (RHYHITTFGC…LEDLLQQVFD (117 aa)) is the MTTase N-terminal domain. [4Fe-4S] cluster is bound by residues Cys20, Cys56, Cys90, Cys162, Cys166, and Cys169. Residues 148–385 (RDSTITAWVN…NHLVAQKAAE (238 aa)) form the Radical SAM core domain. A TRAM domain is found at 388 to 451 (QRYLGRIEEV…RAFSLTGEIV (64 aa)).

It belongs to the methylthiotransferase family. MiaB subfamily. In terms of assembly, monomer. [4Fe-4S] cluster is required as a cofactor.

The protein localises to the cytoplasm. It carries out the reaction N(6)-dimethylallyladenosine(37) in tRNA + (sulfur carrier)-SH + AH2 + 2 S-adenosyl-L-methionine = 2-methylsulfanyl-N(6)-dimethylallyladenosine(37) in tRNA + (sulfur carrier)-H + 5'-deoxyadenosine + L-methionine + A + S-adenosyl-L-homocysteine + 2 H(+). Catalyzes the methylthiolation of N6-(dimethylallyl)adenosine (i(6)A), leading to the formation of 2-methylthio-N6-(dimethylallyl)adenosine (ms(2)i(6)A) at position 37 in tRNAs that read codons beginning with uridine. This is tRNA-2-methylthio-N(6)-dimethylallyladenosine synthase from Rippkaea orientalis (strain PCC 8801 / RF-1) (Cyanothece sp. (strain PCC 8801)).